The sequence spans 258 residues: SMH class II histocompatibility antigen, beta-1 chain (258 aa).

The signal sequence occupies residues 1 to 29; sequence MMVLPVPVAPWTAALTVLLMVLNKSVVQG. Positions 30 to 121 are beta-1; sequence RTTPENYLFR…LNQRLSQSLI (92 aa). Topologically, residues 30 to 225 are extracellular; sequence RTTPENYLFR…RAQSDSARNK (196 aa). 2 cysteine pairs are disulfide-bonded: C44–C106 and C144–C200. Residues 122 to 215 form a beta-2 region; the sequence is AQPKVHVSPS…SLDRPITVEW (94 aa). Residues 124–212 enclose the Ig-like C1-type domain; the sequence is PKVHVSPSKG…EHPSLDRPIT (89 aa). Positions 216–225 are connecting peptide; the sequence is RAQSDSARNK. N-linked (GlcNAc...) asparagine glycosylation is present at N224. A helical membrane pass occupies residues 226-246; that stretch reads TLTGVGGLVLGLIFLAVGLIM. Residues 247-258 are Cytoplasmic-facing; that stretch reads HVRSKKAQRGSR.

The protein belongs to the MHC class II family.

Its subcellular location is the membrane. The chain is SMH class II histocompatibility antigen, beta-1 chain from Spalax ehrenbergi (Middle East blind mole rat).